A 55-amino-acid polypeptide reads, in one-letter code: Large ribosomal subunit protein bL33 (55 aa).

The protein belongs to the bacterial ribosomal protein bL33 family. Part of the 50S ribosomal subunit. Contacts protein L35.

Binds the 23S rRNA and the E site tRNA. The sequence is that of Large ribosomal subunit protein bL33 (rpmG) from Deinococcus radiodurans (strain ATCC 13939 / DSM 20539 / JCM 16871 / CCUG 27074 / LMG 4051 / NBRC 15346 / NCIMB 9279 / VKM B-1422 / R1).